The sequence spans 199 residues: 7-methyl-GTP pyrophosphatase (199 aa).

Asp-76 (proton acceptor) is an active-site residue.

This sequence belongs to the Maf family. YceF subfamily. Requires a divalent metal cation as cofactor.

The protein resides in the cytoplasm. It catalyses the reaction N(7)-methyl-GTP + H2O = N(7)-methyl-GMP + diphosphate + H(+). Functionally, nucleoside triphosphate pyrophosphatase that hydrolyzes 7-methyl-GTP (m(7)GTP). May have a dual role in cell division arrest and in preventing the incorporation of modified nucleotides into cellular nucleic acids. This is 7-methyl-GTP pyrophosphatase from Rhizobium etli (strain ATCC 51251 / DSM 11541 / JCM 21823 / NBRC 15573 / CFN 42).